The following is a 200-amino-acid chain: Peptidyl-tRNA hydrolase (200 aa).

Tyr-16 contributes to the tRNA binding site. The active-site Proton acceptor is His-21. Phe-67, Asn-69, and Asn-115 together coordinate tRNA.

It belongs to the PTH family. As to quaternary structure, monomer.

The protein localises to the cytoplasm. It carries out the reaction an N-acyl-L-alpha-aminoacyl-tRNA + H2O = an N-acyl-L-amino acid + a tRNA + H(+). Its function is as follows. Hydrolyzes ribosome-free peptidyl-tRNAs (with 1 or more amino acids incorporated), which drop off the ribosome during protein synthesis, or as a result of ribosome stalling. Functionally, catalyzes the release of premature peptidyl moieties from peptidyl-tRNA molecules trapped in stalled 50S ribosomal subunits, and thus maintains levels of free tRNAs and 50S ribosomes. The sequence is that of Peptidyl-tRNA hydrolase from Prochlorococcus marinus (strain MIT 9312).